Here is a 516-residue protein sequence, read N- to C-terminus: Immunoglobulin G-binding protein A (516 aa).

The first 36 residues, 1–36 (MKKKNIYSIRKLGVGIASVTLGTLLISGGVTPAANA), serve as a signal peptide directing secretion. The YSIRK-G/S signaling motif signature appears at 7–18 (YSIRKLGVGIAS). Residues 37 to 92 (AQHDEAQQNAFYQVLNMPNLNADQRNGFIQSLKDDPSQSANVLGEAQKLNDSQAPK) form an Immunoglobulin-binding region E repeat. Residues 93–153 (ADAQQNNFNK…KKLNESQAPK (61 aa)) form an Immunoglobulin-binding region D repeat. The stretch at 154–211 (ADNNFNKEQQNAFYEILNMPNLNEEQRNGFIQSLKDDPSQSANLLSEAKKLNESQAPK) is one Immunoglobulin-binding region A repeat. The Immunoglobulin-binding region B repeat unit spans residues 212 to 269 (ADNKFNKEQQNAFYEILHLPNLNEEQRNGFIQSLKDDPSQSANLLAEAKKLNDAQAPK). The Immunoglobulin-binding region C repeat unit spans residues 270–327 (ADNKFNKEQQNAFYEILHLPNLTEEQRNGFIQSLKDDPSVSKEILAEAKKLNDAQAPK). Over residues 318-420 (KKLNDAQAPK…GNKPGKEDGN (103 aa)) the composition is skewed to basic and acidic residues. 2 disordered regions span residues 318 to 440 (KKLN…ANGT) and 467 to 487 (KKQP…ETGE). A run of 11 repeats spans residues 333–340 (KPGKEDNN), 341–348 (KPGKEDNN), 349–356 (KPGKEDNN), 357–364 (KPGKEDNN), 365–372 (KPGKEDGN), 373–380 (KPGKEDNK), 381–388 (KPGKEDGN), 389–396 (KPGKEDNK), 397–404 (KPGKEDGN), 405–412 (KPGKEDGN), and 413–420 (KPGKEDGN). The 11 X 8 AA approximate tandem repeats stretch occupies residues 333-420 (KPGKEDNNKP…GNKPGKEDGN (88 aa)). The region spanning 421–465 (GVHVVKPGDTVNDIAKANGTTADKIAADNKLADKNMIKPGQELVV) is the LysM domain. An LPXTG sorting signal motif is present at residues 482–486 (LPETG). Residue Thr-485 is modified to Pentaglycyl murein peptidoglycan amidated threonine. The propeptide at 486–516 (GEENPFIGTTVFGGLSLALGAALLAGRRREL) is removed by sortase A.

The protein belongs to the immunoglobulin-binding protein SpA family. Interacts with host TNFRSF1A; this interaction leads to the stimulation of both surface expression and shedding of TNFRSF1A.

The protein resides in the secreted. It is found in the cell wall. Functionally, plays a role in the inhibition of the host innate and adaptive immune responses. Possesses five immunoglobulin-binding domains that capture both the fragment crystallizable region (Fc region) and the Fab region (part of Ig that identifies antigen) of immunoglobulins. In turn, Staphylococcus aureus is protected from phagocytic killing via inhibition of Ig Fc region. In addition, the host elicited B-cell response is prevented due to a decrease of antibody-secreting cell proliferation that enter the bone marrow, thereby decreasing long-term antibody production. Inhibits osteogenesis by preventing osteoblast proliferation and expression of alkaline phosphatase, type I collagen, osteopontin and osteocalcin. Acts directly as a pro-inflammatory factor in the lung through its ability to bind and activate tumor necrosis factor alpha receptor 1/TNFRSF1A. This is Immunoglobulin G-binding protein A (spa) from Staphylococcus aureus (strain NCTC 8325 / PS 47).